We begin with the raw amino-acid sequence, 154 residues long: SsrA-binding protein (154 aa).

It belongs to the SmpB family.

The protein resides in the cytoplasm. Its function is as follows. Required for rescue of stalled ribosomes mediated by trans-translation. Binds to transfer-messenger RNA (tmRNA), required for stable association of tmRNA with ribosomes. tmRNA and SmpB together mimic tRNA shape, replacing the anticodon stem-loop with SmpB. tmRNA is encoded by the ssrA gene; the 2 termini fold to resemble tRNA(Ala) and it encodes a 'tag peptide', a short internal open reading frame. During trans-translation Ala-aminoacylated tmRNA acts like a tRNA, entering the A-site of stalled ribosomes, displacing the stalled mRNA. The ribosome then switches to translate the ORF on the tmRNA; the nascent peptide is terminated with the 'tag peptide' encoded by the tmRNA and targeted for degradation. The ribosome is freed to recommence translation, which seems to be the essential function of trans-translation. This is SsrA-binding protein from Streptococcus thermophilus (strain CNRZ 1066).